The chain runs to 119 residues: Large ribosomal subunit protein bL20 (119 aa).

This sequence belongs to the bacterial ribosomal protein bL20 family.

Functionally, binds directly to 23S ribosomal RNA and is necessary for the in vitro assembly process of the 50S ribosomal subunit. It is not involved in the protein synthesizing functions of that subunit. The chain is Large ribosomal subunit protein bL20 from Bordetella petrii (strain ATCC BAA-461 / DSM 12804 / CCUG 43448).